A 274-amino-acid chain; its full sequence is Shikimate dehydrogenase (NADP(+)) (274 aa).

Residues 14–16 (SKS) and Thr60 contribute to the shikimate site. The active-site Proton acceptor is the Lys64. Glu76 contributes to the NADP(+) binding site. The shikimate site is built by Asn85 and Asp101. Residues 126–130 (GAGGA), 150–155 (NRTAEK), and Met214 each bind NADP(+). A shikimate-binding site is contributed by Tyr216. Gly238 is an NADP(+) binding site.

It belongs to the shikimate dehydrogenase family. Homodimer.

The enzyme catalyses shikimate + NADP(+) = 3-dehydroshikimate + NADPH + H(+). Its pathway is metabolic intermediate biosynthesis; chorismate biosynthesis; chorismate from D-erythrose 4-phosphate and phosphoenolpyruvate: step 4/7. Its function is as follows. Involved in the biosynthesis of the chorismate, which leads to the biosynthesis of aromatic amino acids. Catalyzes the reversible NADPH linked reduction of 3-dehydroshikimate (DHSA) to yield shikimate (SA). The polypeptide is Shikimate dehydrogenase (NADP(+)) (Pseudomonas paraeruginosa (strain DSM 24068 / PA7) (Pseudomonas aeruginosa (strain PA7))).